Here is a 304-residue protein sequence, read N- to C-terminus: Germ cell-specific gene 1-like protein (304 aa).

At 1-8 (MKTTRKCR) the chain is on the cytoplasmic side. The helical transmembrane segment at 9-29 (ALLSVGLNLLALLFSTTAFIT) threads the bilayer. Residues 30-112 (TYWCEGTQRV…FIDLAPASER (83 aa)) lie on the Extracellular side of the membrane. Residues 113 to 133 (GVLWLSVVSEVLYIMLLVVGF) traverse the membrane as a helical segment. Residues 134-153 (SLMCLELFHSSNVIDGLKLN) are Cytoplasmic-facing. Residues 154-174 (AFAAVFTVLSGLLGMVAHMMY) traverse the membrane as a helical segment. The Extracellular segment spans residues 175–197 (TQVFQITVSLGPEDWRPHTWDYG). Residues 198 to 218 (WSFCMAWGSFTCCMAASVTTL) traverse the membrane as a helical segment. Topologically, residues 219–304 (NSYTKTVIEF…NTESLGEEQC (86 aa)) are cytoplasmic. Positions 266–278 (VDVYPSHGSSHGN) are enriched in polar residues. Residues 266 to 304 (VDVYPSHGSSHGNSRGKMRSPPAPVDQGDNTESLGEEQC) are disordered.

The protein belongs to the GSG1 family. Component of the AMPAR complex.

It localises to the cell membrane. It is found in the synapse. In terms of biological role, as a component of the AMPAR complex, modifies AMPA receptor (AMPAR) gating. In Danio rerio (Zebrafish), this protein is Germ cell-specific gene 1-like protein (gsg1l).